Reading from the N-terminus, the 239-residue chain is Ribonuclease PH (239 aa).

Phosphate-binding positions include arginine 86 and 124-126; that span reads GTR.

The protein belongs to the RNase PH family. In terms of assembly, homohexameric ring arranged as a trimer of dimers.

It carries out the reaction tRNA(n+1) + phosphate = tRNA(n) + a ribonucleoside 5'-diphosphate. Functionally, phosphorolytic 3'-5' exoribonuclease that plays an important role in tRNA 3'-end maturation. Removes nucleotide residues following the 3'-CCA terminus of tRNAs; can also add nucleotides to the ends of RNA molecules by using nucleoside diphosphates as substrates, but this may not be physiologically important. Probably plays a role in initiation of 16S rRNA degradation (leading to ribosome degradation) during starvation. This chain is Ribonuclease PH, found in Psychromonas ingrahamii (strain DSM 17664 / CCUG 51855 / 37).